The sequence spans 471 residues: Trigger factor (471 aa).

Residues 162 to 243 (GDFVVMDLVA…VSQVQEQELP (82 aa)) form the PPIase FKBP-type domain. The interval 436-471 (LRPDGTIGEPEDEIEAETEIEIEPAAETDTEADTEQ) is disordered. The segment covering 444–471 (EPEDEIEAETEIEIEPAAETDTEADTEQ) has biased composition (acidic residues).

It belongs to the FKBP-type PPIase family. Tig subfamily.

The protein resides in the cytoplasm. It catalyses the reaction [protein]-peptidylproline (omega=180) = [protein]-peptidylproline (omega=0). In terms of biological role, involved in protein export. Acts as a chaperone by maintaining the newly synthesized protein in an open conformation. Functions as a peptidyl-prolyl cis-trans isomerase. The chain is Trigger factor from Nocardioides sp. (strain ATCC BAA-499 / JS614).